The primary structure comprises 1035 residues: MHLIKPSWLSHSGEQKDFEVYSCHVSPDGKRLATAGGDGHVRVWSVEAIFNSHDRNYTKPRQLCHMSHHLGTIHSVRFSPNGRYLASGADDKIICIYHLDSNPPSHTSTFGTNEPPPVENWKTYKRLVGHDNDVQDLAWSPDNSLLVSVGLDSKIVVWSGHTFEKLKTLAVHQSHVKGITFDPANKFFATASDDRTIKIFRYTAPAPNATQHDMVNNFILETSISVPFKHSPLTTYFRRCSWSPDGNHIAAANAVNGPVSSIAIIERTGWDSEINLIGHEAPTEVCMFSPRLFYTQKPDENSNANGAASPGLVTVIASAGQDKTLTIWNTNTSRPVLIVQDIASKSVSDLAWTPDGQTVFAASLDGGVIAAQFETGELGWVAKSEENDKALQKYGGSRKGMGTAEDVDGLHLENHSKEKELRGAESRMGALMGDPGPAQKETATTTNGVKPAGKAADTNGTTTPAPPEKPEEESADKTAERIAELKSRVTITKDGKKRVAPLLVSSSGTGLSSLPQAQLVGASSTKPVQNDNPQTILDLSKPYDGLPRGGIAAMLLGNKRKAVIVEDEEEEEPSAKRSATGPVPIVVNGVEGLEPAPLSAPAHGLVPTPEFLRPAVISPNIAYSQVRLAVPKIRSHILRPLERGVLQEETSLEDATKVPENIVLEAKNPAHIREPARITATKRGALLWQDFLPRAIILVAGSKHFWAAACEDGTLHTWSPAGRRLMNAIMLESQPVILEARDSWLLCVTAVGLCHVYNIKTMSSPHPPVSLAPILDVAMTSLSPHGATPAPGVTSAHLNSSGVIVVTLSNGDGFYYSTSLYAWQRLSESWWAVGSQYWNSNDSSVSALQTTAVGPVSGAKNGEGETNVSAGIIPYLERHTTTEFLLKGRAYTLQRLVKALLARDGFENFESSVSIAHLENRIAGAFALGAREEFRLYLFMYAKRIGAENQKTKVEELLNSLIGGVLRDADDGEGWFSKQDKLCGWDRKDLLQGVVLILGKFRDLHRLTVQYARILDMTLGDEEKETTDEGMEVED.

7 WD repeats span residues 15-54 (QKDF…NSHD), 68-107 (HHLG…PSHT), 129-168 (GHDN…KLKT), 171-210 (VHQS…PNAT), 232-275 (PLTT…SEIN), 299-338 (DENS…PVLI), and 342-383 (IASK…WVAK). The tract at residues 393–479 (KYGGSRKGMG…PEEESADKTA (87 aa)) is disordered. Positions 408-425 (DGLHLENHSKEKELRGAE) are enriched in basic and acidic residues.

Belongs to the WD repeat HIR1 family.

Its subcellular location is the nucleus. Required for replication-independent chromatin assembly and for the periodic repression of histone gene transcription during the cell cycle. The chain is Protein hir-1 (hir-1) from Neurospora crassa (strain ATCC 24698 / 74-OR23-1A / CBS 708.71 / DSM 1257 / FGSC 987).